The sequence spans 88 residues: Elongation factor 1-beta (88 aa).

Belongs to the EF-1-beta/EF-1-delta family.

In terms of biological role, promotes the exchange of GDP for GTP in EF-1-alpha/GDP, thus allowing the regeneration of EF-1-alpha/GTP that could then be used to form the ternary complex EF-1-alpha/GTP/AAtRNA. The protein is Elongation factor 1-beta (ef1b) of Archaeoglobus fulgidus (strain ATCC 49558 / DSM 4304 / JCM 9628 / NBRC 100126 / VC-16).